A 207-amino-acid polypeptide reads, in one-letter code: Zinc finger protein 487 (207 aa).

One can recognise a KRAB domain in the interval 1-43 (MLENYSLLLSVGYCITKPEVVCKLEHGQVLWILEEESPSQSHL). The segment at 177-202 (KQCFEYNQCGKAFHEEAACSTHKRVC) adopts a C2H2-type; atypical zinc-finger fold.

Belongs to the krueppel C2H2-type zinc-finger protein family.

It is found in the nucleus. In terms of biological role, may be involved in transcriptional regulation. This is Zinc finger protein 487 (ZNF487) from Homo sapiens (Human).